Consider the following 207-residue polypeptide: Strobilurin A biosynthesis cluster protein r1 (207 aa).

Transmembrane regions (helical) follow at residues 108 to 128 and 169 to 189; these read FIFP…LLYL and NLTT…PFWI.

Its subcellular location is the membrane. Its pathway is mycotoxin biosynthesis. Part of the gene cluster that mediates the biosynthesis of strobilurin A, an antifungal polyketide that contains a key beta-methoxyacrylate toxophore that targets the complex III of the mitochondrial electron transport chain. Strobilurin biosynthesis begins with construction of benzoyl CoA by step-wise elimination of ammonia from phenylalanine by the phenylalanine ammonia-lyase str11, oxygenation by str8 and retro-Claisen reaction to form benzoic acid, which is activated to its CoA thiolester benzoyl CoA by the dedicated CoA ligase str10. Benzoyl CoA forms the starter unit for the highly reducing polyketide synthase stpks1 that produces the polyketide prestrobilutin A. The FAD-dependent oxygenase str9 then catalyzes the key oxidative rearrangement responsible for the creation of the beta-methoxyacrylate toxophore. Str9 performs epoxidation of the 2,3 olefin of prestrobilutin A, followed by Meinwald rearrangement to furnish the aldehyde intermediate. Rapid enolization of the aldehyde intermediate would give the beta-methoxyacrylate skeleton and methylations catalyzed by str2 and str3 complete the synthesis and lead to the production of strobilurin A. The short-chain dehydrogenase stl2 and the dehydrogenase str4 play a role in the shunt pathway leading to the production of bolineol. The cluster encodes no obvious halogenase gene that could be involved in production of strobilurin B, nor any obvious dimethylallyl-transferase that could be involved in the production of strobilurin G. It is possible that unknown proteins encoded in, or near, the cluster (such as str1 or stl1) may form new classes of halogenases or dimethylally-transferases, or that the responsible genes are located elsewhere on the genome. Similarly, proteins encoded by str5/str6 hydrolases appear to have no chemical role in the biosynthesis of strobilurin A. Finally, no obvious self-resistance gene is found within the cluster. This chain is Strobilurin A biosynthesis cluster protein r1, found in Strobilurus tenacellus.